The chain runs to 224 residues: Cerebellin-2 (224 aa).

An N-terminal signal peptide occupies residues 1–51; sequence MQAPGRGPLGLRLMMPGRRGALREPGGCGSCLGVALALLLLLLPACCPVRA. N-linked (GlcNAc...) asparagine glycosylation is found at Asn53 and Asn110. The 137-residue stretch at 88-224 folds into the C1q domain; sequence SGSAKVAFSA…TFSGFLVFPL (137 aa).

In terms of assembly, homohexamer; disulfide-linked homotrimers. The trimers are assembled via the globular C1q domains. The trimers associate via N-terminal cysteine residues to form disulfide-linked hexamers. May form homooligomers or heterooligomers with CBLN1 and CBLN3 prior to secretion. Once secreted, does not interact with other CBLN family members. Interacts with GRID2, and more weakly with GRID1. Interacts with NRXN1 and NRXN2 long and short isoforms produced by alternative promoter usage. Weakly interacts with NRXN3 short isoform and not at all with NRXN3 long isoform.

It localises to the secreted. In terms of biological role, acts as a synaptic organizer in specific subsets of neurons in the brain. Essential for long-term maintenance but not establishment of excitatory synapses. Functions as part of a trans-synaptic complex by binding to postsynaptic GRID1 and presynaptic neurexins. This interaction helps regulate the activity of NMDA and AMPA receptors at hippocampal synapses without affecting synapse formation. NRXN1B-CBLN2-GRID1 complex transduce presynaptic signals into postsynaptic NMDAR response. NRXN3B-CBLN2-GRID1 complex transduce presynaptic signals into postsynaptic AMPAR response. This Homo sapiens (Human) protein is Cerebellin-2.